The chain runs to 365 residues: Histidinol-phosphate aminotransferase (365 aa).

Lysine 220 carries the N6-(pyridoxal phosphate)lysine modification.

This sequence belongs to the class-II pyridoxal-phosphate-dependent aminotransferase family. Histidinol-phosphate aminotransferase subfamily. In terms of assembly, homodimer. Requires pyridoxal 5'-phosphate as cofactor.

It carries out the reaction L-histidinol phosphate + 2-oxoglutarate = 3-(imidazol-4-yl)-2-oxopropyl phosphate + L-glutamate. Its pathway is amino-acid biosynthesis; L-histidine biosynthesis; L-histidine from 5-phospho-alpha-D-ribose 1-diphosphate: step 7/9. The chain is Histidinol-phosphate aminotransferase from Neisseria meningitidis serogroup A / serotype 4A (strain DSM 15465 / Z2491).